A 410-amino-acid polypeptide reads, in one-letter code: Serine proteinase inhibitor A3K (410 aa).

Positions 1-24 (MPSAISRGLLLLAGLCYLVFGIMA) are cleaved as a signal peptide. N62, N99, N162, N229, and N263 each carry an N-linked (GlcNAc...) asparagine glycan. The RCL stretch occupies residues 360-381 (GTEAAAATVLEATRTARPPRLS).

This sequence belongs to the serpin family.

It localises to the secreted. The protein resides in the extracellular space. In terms of biological role, contrapsin inhibits trypsin-like proteases. The polypeptide is Serine proteinase inhibitor A3K (SERPINA3K) (Cavia porcellus (Guinea pig)).